Reading from the N-terminus, the 71-residue chain is Large ribosomal subunit protein bL31 (71 aa).

Zn(2+) contacts are provided by cysteine 16, cysteine 18, cysteine 36, and cysteine 39.

It belongs to the bacterial ribosomal protein bL31 family. Type A subfamily. Part of the 50S ribosomal subunit. Zn(2+) is required as a cofactor.

Its function is as follows. Binds the 23S rRNA. The chain is Large ribosomal subunit protein bL31 from Petrotoga mobilis (strain DSM 10674 / SJ95).